Reading from the N-terminus, the 224-residue chain is Redox-sensing transcriptional repressor Rex (224 aa).

The H-T-H motif DNA-binding region spans arginine 17–phenylalanine 56. Residue glycine 91–glycine 96 participates in NAD(+) binding.

Belongs to the transcriptional regulatory Rex family. In terms of assembly, homodimer.

The protein resides in the cytoplasm. Functionally, modulates transcription in response to changes in cellular NADH/NAD(+) redox state. In Thermoanaerobacter pseudethanolicus (strain ATCC 33223 / 39E) (Clostridium thermohydrosulfuricum), this protein is Redox-sensing transcriptional repressor Rex.